A 199-amino-acid chain; its full sequence is Adenylyl-sulfate kinase (199 aa).

The disordered stretch occupies residues 1–22 (MSESNHITWHDSEVTKKQRQHK). 34-41 (GLSGSGKS) is an ATP binding site. Serine 108 serves as the catalytic Phosphoserine intermediate.

The protein belongs to the APS kinase family.

The enzyme catalyses adenosine 5'-phosphosulfate + ATP = 3'-phosphoadenylyl sulfate + ADP + H(+). It participates in sulfur metabolism; hydrogen sulfide biosynthesis; sulfite from sulfate: step 2/3. Catalyzes the synthesis of activated sulfate. This is Adenylyl-sulfate kinase from Staphylococcus epidermidis (strain ATCC 12228 / FDA PCI 1200).